The sequence spans 257 residues: NAD-capped RNA hydrolase NudC (257 aa).

Substrate is bound at residue R69. The Zn(2+) site is built by C98 and C101. Position 111 (E111) interacts with substrate. Residues C116 and C119 each coordinate Zn(2+). Position 124 (Y124) interacts with substrate. The Nudix hydrolase domain maps to 125–248 (PQIAPCIIVA…TVARRLIEDT (124 aa)). A divalent metal cation is bound by residues A158, E174, and E178. Positions 159 to 180 (GFVEVGETLEQAVAREVMEESG) match the Nudix box motif. A substrate-binding site is contributed by 192 to 199 (QPWPFPQS). E219 contributes to the a divalent metal cation binding site. Substrate is bound at residue A241.

It belongs to the Nudix hydrolase family. NudC subfamily. In terms of assembly, homodimer. It depends on Mg(2+) as a cofactor. The cofactor is Mn(2+). Requires Zn(2+) as cofactor.

The enzyme catalyses a 5'-end NAD(+)-phospho-ribonucleoside in mRNA + H2O = a 5'-end phospho-adenosine-phospho-ribonucleoside in mRNA + beta-nicotinamide D-ribonucleotide + 2 H(+). It carries out the reaction NAD(+) + H2O = beta-nicotinamide D-ribonucleotide + AMP + 2 H(+). The catalysed reaction is NADH + H2O = reduced beta-nicotinamide D-ribonucleotide + AMP + 2 H(+). Functionally, mRNA decapping enzyme that specifically removes the nicotinamide adenine dinucleotide (NAD) cap from a subset of mRNAs by hydrolyzing the diphosphate linkage to produce nicotinamide mononucleotide (NMN) and 5' monophosphate mRNA. The NAD-cap is present at the 5'-end of some mRNAs and stabilizes RNA against 5'-processing. Has preference for mRNAs with a 5'-end purine. Catalyzes the hydrolysis of a broad range of dinucleotide pyrophosphates. The chain is NAD-capped RNA hydrolase NudC from Salmonella typhi.